Reading from the N-terminus, the 972-residue chain is DNA cross-link repair 1A protein (972 aa).

Positions 14–80 (YKSIRKRKPQ…SEDLDPCKDD (67 aa)) are disordered. A compositionally biased stretch (polar residues) spans 23–37 (QSNPDSTSVSMQTVT). Over residues 39-54 (GKCRPKRKGSGNRKKS) the composition is skewed to basic residues. Positions 64–80 (SEQRLRPSEDLDPCKDD) are enriched in basic and acidic residues. Residues 105-135 (DGYCPSCQMPFSLLVVQTPRWHVAECLDTPG) form a UBZ4-type zinc finger. 4 residues coordinate Zn(2+): cysteine 108, cysteine 111, histidine 126, and cysteine 130. 2 disordered regions span residues 191–219 (KSSC…NNEC) and 552–623 (GEAC…TTDE). Residues 210-219 (NLKNVPNNEC) are compositionally biased toward polar residues.

Belongs to the DNA repair metallo-beta-lactamase (DRMBL) family. Binds PIAS1.

The protein resides in the nucleus. It carries out the reaction a beta-lactam + H2O = a substituted beta-amino acid. Functionally, may be required for DNA interstrand cross-link repair. The sequence is that of DNA cross-link repair 1A protein (DCLRE1A) from Gallus gallus (Chicken).